The chain runs to 197 residues: FMN-dependent NADH:quinone oxidoreductase (197 aa).

FMN is bound by residues S10, 16–18 (SQS), 93–96 (MYNF), and 137–140 (TRGG).

It belongs to the azoreductase type 1 family. As to quaternary structure, homodimer. FMN serves as cofactor.

The catalysed reaction is 2 a quinone + NADH + H(+) = 2 a 1,4-benzosemiquinone + NAD(+). It catalyses the reaction N,N-dimethyl-1,4-phenylenediamine + anthranilate + 2 NAD(+) = 2-(4-dimethylaminophenyl)diazenylbenzoate + 2 NADH + 2 H(+). Its function is as follows. Quinone reductase that provides resistance to thiol-specific stress caused by electrophilic quinones. In terms of biological role, also exhibits azoreductase activity. Catalyzes the reductive cleavage of the azo bond in aromatic azo compounds to the corresponding amines. This is FMN-dependent NADH:quinone oxidoreductase from Shewanella denitrificans (strain OS217 / ATCC BAA-1090 / DSM 15013).